The following is a 195-amino-acid chain: MSLVPIVVEQTNRGERAYDIFSRLLKDRIVFLGDEINDTTASLVIAQMLFLEAEDPDKDIWLYINSPGGSITAGLAIYDTMQYIKPDVVTLCVGMAASMAAFLLAAGAKGKRFALPNSEIMIHQPWGGMQGQATDIKIHAERLLRLRDKLERILSENTGQPLEKIKADMERDYFMTAEEAKTYGIIDDILVRHKK.

The active-site Nucleophile is the Ser98. The active site involves His123.

Belongs to the peptidase S14 family. Fourteen ClpP subunits assemble into 2 heptameric rings which stack back to back to give a disk-like structure with a central cavity, resembling the structure of eukaryotic proteasomes.

Its subcellular location is the cytoplasm. It carries out the reaction Hydrolysis of proteins to small peptides in the presence of ATP and magnesium. alpha-casein is the usual test substrate. In the absence of ATP, only oligopeptides shorter than five residues are hydrolyzed (such as succinyl-Leu-Tyr-|-NHMec, and Leu-Tyr-Leu-|-Tyr-Trp, in which cleavage of the -Tyr-|-Leu- and -Tyr-|-Trp bonds also occurs).. Its function is as follows. Cleaves peptides in various proteins in a process that requires ATP hydrolysis. Has a chymotrypsin-like activity. Plays a major role in the degradation of misfolded proteins. In Caldanaerobacter subterraneus subsp. tengcongensis (strain DSM 15242 / JCM 11007 / NBRC 100824 / MB4) (Thermoanaerobacter tengcongensis), this protein is ATP-dependent Clp protease proteolytic subunit.